A 458-amino-acid polypeptide reads, in one-letter code: Bifunctional protein GlmU (458 aa).

The interval M1–K230 is pyrophosphorylase. UDP-N-acetyl-alpha-D-glucosamine contacts are provided by residues L9–G12, K23, Q75, and G80–T81. D104 is a Mg(2+) binding site. UDP-N-acetyl-alpha-D-glucosamine is bound by residues G139, E155, N170, and N228. N228 contacts Mg(2+). Residues I231–Q251 form a linker region. Residues G252 to N458 are N-acetyltransferase. Residues R334 and K352 each contribute to the UDP-N-acetyl-alpha-D-glucosamine site. Catalysis depends on H364, which acts as the Proton acceptor. Positions 367 and 378 each coordinate UDP-N-acetyl-alpha-D-glucosamine. Acetyl-CoA contacts are provided by residues A381, N387–Y388, S406, A424, and R441.

It in the N-terminal section; belongs to the N-acetylglucosamine-1-phosphate uridyltransferase family. The protein in the C-terminal section; belongs to the transferase hexapeptide repeat family. In terms of assembly, homotrimer. Mg(2+) serves as cofactor.

The protein resides in the cytoplasm. The enzyme catalyses alpha-D-glucosamine 1-phosphate + acetyl-CoA = N-acetyl-alpha-D-glucosamine 1-phosphate + CoA + H(+). It catalyses the reaction N-acetyl-alpha-D-glucosamine 1-phosphate + UTP + H(+) = UDP-N-acetyl-alpha-D-glucosamine + diphosphate. It functions in the pathway nucleotide-sugar biosynthesis; UDP-N-acetyl-alpha-D-glucosamine biosynthesis; N-acetyl-alpha-D-glucosamine 1-phosphate from alpha-D-glucosamine 6-phosphate (route II): step 2/2. Its pathway is nucleotide-sugar biosynthesis; UDP-N-acetyl-alpha-D-glucosamine biosynthesis; UDP-N-acetyl-alpha-D-glucosamine from N-acetyl-alpha-D-glucosamine 1-phosphate: step 1/1. It participates in bacterial outer membrane biogenesis; LPS lipid A biosynthesis. In terms of biological role, catalyzes the last two sequential reactions in the de novo biosynthetic pathway for UDP-N-acetylglucosamine (UDP-GlcNAc). The C-terminal domain catalyzes the transfer of acetyl group from acetyl coenzyme A to glucosamine-1-phosphate (GlcN-1-P) to produce N-acetylglucosamine-1-phosphate (GlcNAc-1-P), which is converted into UDP-GlcNAc by the transfer of uridine 5-monophosphate (from uridine 5-triphosphate), a reaction catalyzed by the N-terminal domain. In Nitrosomonas europaea (strain ATCC 19718 / CIP 103999 / KCTC 2705 / NBRC 14298), this protein is Bifunctional protein GlmU.